Consider the following 446-residue polypeptide: Transcription factor Sox-10 (446 aa).

3 disordered regions span residues 1–60 (MSDD…SEDE), 153–191 (RLRM…AEGG), and 203–264 (HLDH…IDFG). Positions 36–48 (DDDDDDDEEEEEE) are enriched in acidic residues. A Glycyl lysine isopeptide (Lys-Gly) (interchain with G-Cter in SUMO) cross-link involves residue lysine 52. The tract at residues 56–96 (DSEDERFPVCIREAVSQVLNGYDWTLVPMPVRVNGGSKSKP) is dimerization (DIM). Residues 98–166 (VKRPMNAFMV…QHKKDHPDYK (69 aa)) constitute a DNA-binding region (HMG box). Residues 153–167 (RLRMQHKKDHPDYKY) show a composition bias toward basic and acidic residues. Residues 213 to 226 (SDGNSEHSTGQSHG) are compositionally biased toward polar residues. A transactivation domain (TAM) region spans residues 217–303 (SEHSTGQSHG…NGHAGHPSHI (87 aa)). Residues 243 to 257 (SDGKRDGSHALREGG) are compositionally biased toward basic and acidic residues. The interval 337–446 (KAQVKTESSS…QPVYTTLSRP (110 aa)) is transactivation domain (TAC). Lysine 341 is covalently cross-linked (Glycyl lysine isopeptide (Lys-Gly) (interchain with G-Cter in SUMO)). The disordered stretch occupies residues 421–446 (SDPPSVAQSHSPTHWEQPVYTTLSRP). The span at 426 to 446 (VAQSHSPTHWEQPVYTTLSRP) shows a compositional bias: polar residues.

As to quaternary structure, interacts with the sumoylation factors ube2i/ubc9 and sumo1. Post-translationally, sumoylated. In terms of tissue distribution, first expressed at stages 13/14 at the lateral edges of the neural plate, in the neural crest forming region. By stage 22, neural crest cells migrate in the cranial region and strong expression is seen in the crest cells that populate the branchial arches as well as those migrating in the frontonasal region. Also strongly expressed in the trunk neural crest. Expression in the otic vesicle begins around stage 25 and persists until at least stage 40. At stage 30, expression is down-regulated in the cranial neural crest of the pharyngeal arches but persists in the trunk neural crest, in the otic vesicle and in discrete domains adjacent to the hindbrain. At stage 40, expression is restricted to the otic vesicle, differentiated pigment cells, and in several cranial ganglia.

It is found in the cytoplasm. The protein localises to the nucleus. In terms of biological role, acts early in neural crest formation, functioning redundantly with the other group E Sox factors sox8 and sox9 to induce neural crest progenitors. Acts downstream of wnt-signaling at the neural plate border. Involved in the specification of neural crest progenitors fated to form the pigment cell lineage. This is Transcription factor Sox-10 (sox10) from Xenopus laevis (African clawed frog).